The primary structure comprises 449 residues: Tubulin alpha-1C chain (449 aa).

The MREC motif motif lies at 1–4 (MREC). Glutamine 11 serves as a coordination point for GTP. N6-acetyllysine is present on lysine 40. GTP is bound by residues glutamate 71, serine 140, glycine 144, threonine 145, threonine 179, asparagine 206, and asparagine 228. Glutamate 71 contacts Mg(2+). The active site involves glutamate 254. Tyrosine 282 carries the post-translational modification 3'-nitrotyrosine. The segment at 429 to 449 (EKDYEEVGADSADGEDEGEEY) is disordered. Over residues 431–449 (DYEEVGADSADGEDEGEEY) the composition is skewed to acidic residues. Tyrosine 432 bears the Phosphotyrosine mark. Serine 439 is modified (phosphoserine). Tyrosine 449 carries the post-translational modification 3'-nitrotyrosine.

It belongs to the tubulin family. In terms of assembly, dimer of alpha and beta chains. A typical microtubule is a hollow water-filled tube with an outer diameter of 25 nm and an inner diameter of 15 nM. Alpha-beta heterodimers associate head-to-tail to form protofilaments running lengthwise along the microtubule wall with the beta-tubulin subunit facing the microtubule plus end conferring a structural polarity. Microtubules usually have 13 protofilaments but different protofilament numbers can be found in some organisms and specialized cells. The cofactor is Mg(2+). Post-translationally, some glutamate residues at the C-terminus are polyglutamylated, resulting in polyglutamate chains on the gamma-carboxyl group. Polyglutamylation plays a key role in microtubule severing by spastin (SPAST). SPAST preferentially recognizes and acts on microtubules decorated with short polyglutamate tails: severing activity by SPAST increases as the number of glutamates per tubulin rises from one to eight, but decreases beyond this glutamylation threshold. Glutamylation is also involved in cilia motility. Some glutamate residues at the C-terminus are monoglycylated but not polyglycylated due to the absence of functional TTLL10 in human. Monoglycylation is mainly limited to tubulin incorporated into cilia and flagella axonemes, which is required for their stability and maintenance. Flagella glycylation controls sperm motility. Both polyglutamylation and monoglycylation can coexist on the same protein on adjacent residues, and lowering glycylation levels increases polyglutamylation, and reciprocally. In terms of processing, acetylation of alpha chains at Lys-40 is located inside the microtubule lumen. This modification has been correlated with increased microtubule stability, intracellular transport and ciliary assembly. Post-translationally, methylation of alpha chains at Lys-40 is found in mitotic microtubules and is required for normal mitosis and cytokinesis contributing to genomic stability. Nitration of Tyr-449 is irreversible and interferes with normal dynein intracellular distribution. In terms of processing, undergoes a tyrosination/detyrosination cycle, the cyclic removal and re-addition of a C-terminal tyrosine residue by the enzymes tubulin tyrosine carboxypeptidase (MATCAP1/KIAA0895L, VASH1 or VASH2) and tubulin tyrosine ligase (TTL), respectively. Post-translationally, tyrosination promotes microtubule interaction with CAP-Gly domain-containing proteins such as CLIP1, CLIP2 and DCTN1. Tyrosination regulates the initiation of dynein-dynactin motility via interaction with DCTN1, which brings the dynein-dynactin complex into contact with microtubules. In neurons, tyrosinated tubulins mediate the initiation of retrograde vesicle transport. Detyrosination is involved in metaphase plate congression by guiding chromosomes during mitosis: detyrosination promotes interaction with CENPE, promoting pole-proximal transport of chromosomes toward the equator. Detyrosination increases microtubules-dependent mechanotransduction in dystrophic cardiac and skeletal muscle. In cardiomyocytes, detyrosinated microtubules are required to resist to contractile compression during contraction: detyrosination promotes association with desmin (DES) at force-generating sarcomeres, leading to buckled microtubules and mechanical resistance to contraction.

The protein resides in the cytoplasm. Its subcellular location is the cytoskeleton. The catalysed reaction is GTP + H2O = GDP + phosphate + H(+). In terms of biological role, tubulin is the major constituent of microtubules, a cylinder consisting of laterally associated linear protofilaments composed of alpha- and beta-tubulin heterodimers. Microtubules grow by the addition of GTP-tubulin dimers to the microtubule end, where a stabilizing cap forms. Below the cap, tubulin dimers are in GDP-bound state, owing to GTPase activity of alpha-tubulin. In Homo sapiens (Human), this protein is Tubulin alpha-1C chain (TUBA1C).